Consider the following 270-residue polypeptide: Undecaprenyl-diphosphatase (270 aa).

8 helical membrane-spanning segments follow: residues 14–34, 40–60, 88–108, 117–137, 146–166, 189–209, 221–241, and 249–269; these read GLTEVLPISSSAHLILIPTFL, GITFDVALHLGTFIALCLYFW, FYIIAGTFPAAIVGKLFETTI, SLIALFLIVFALLLAFADTSG, ITLKSAIIIGLAQCLALIPGV, FSFLLSLPIVAGAALFELSGL, PLLIGIATSAVFGYISVAFLL, and LYPFVWYRIAIGCLALVFINF.

The protein belongs to the UppP family.

It is found in the cell inner membrane. The enzyme catalyses di-trans,octa-cis-undecaprenyl diphosphate + H2O = di-trans,octa-cis-undecaprenyl phosphate + phosphate + H(+). Catalyzes the dephosphorylation of undecaprenyl diphosphate (UPP). Confers resistance to bacitracin. This is Undecaprenyl-diphosphatase from Geotalea daltonii (strain DSM 22248 / JCM 15807 / FRC-32) (Geobacter daltonii).